Here is a 211-residue protein sequence, read N- to C-terminus: Urease accessory protein UreE (211 aa).

The interval phenylalanine 134–lysine 211 is disordered. The segment covering proline 147 to aspartate 202 has biased composition (basic and acidic residues).

Belongs to the UreE family.

It localises to the cytoplasm. Involved in urease metallocenter assembly. Binds nickel. Probably functions as a nickel donor during metallocenter assembly. In Rhodopseudomonas palustris (strain BisB18), this protein is Urease accessory protein UreE.